Consider the following 123-residue polypeptide: Small ribosomal subunit protein uS12cz/uS12cy (123 aa).

It belongs to the universal ribosomal protein uS12 family. Part of the 30S ribosomal subunit.

It is found in the plastid. The protein localises to the chloroplast. Its function is as follows. With S4 and S5 plays an important role in translational accuracy. Located at the interface of the 30S and 50S subunits. This chain is Small ribosomal subunit protein uS12cz/uS12cy (rps12-A), found in Psilotum nudum (Whisk fern).